A 907-amino-acid polypeptide reads, in one-letter code: Isoleucine--tRNA ligase (907 aa).

Residues Pro-57 to Ser-67 carry the 'HIGH' region motif. Glu-549 contributes to the L-isoleucyl-5'-AMP binding site. The 'KMSKS' region signature appears at Lys-590–Ser-594. Lys-593 is an ATP binding site. Zn(2+)-binding residues include Cys-867, Cys-870, Cys-889, and Cys-892.

This sequence belongs to the class-I aminoacyl-tRNA synthetase family. IleS type 1 subfamily. As to quaternary structure, monomer. Zn(2+) serves as cofactor.

It localises to the cytoplasm. It carries out the reaction tRNA(Ile) + L-isoleucine + ATP = L-isoleucyl-tRNA(Ile) + AMP + diphosphate. Catalyzes the attachment of isoleucine to tRNA(Ile). As IleRS can inadvertently accommodate and process structurally similar amino acids such as valine, to avoid such errors it has two additional distinct tRNA(Ile)-dependent editing activities. One activity is designated as 'pretransfer' editing and involves the hydrolysis of activated Val-AMP. The other activity is designated 'posttransfer' editing and involves deacylation of mischarged Val-tRNA(Ile). This chain is Isoleucine--tRNA ligase, found in Methylacidiphilum infernorum (isolate V4) (Methylokorus infernorum (strain V4)).